Here is a 433-residue protein sequence, read N- to C-terminus: 3-phosphoshikimate 1-carboxyvinyltransferase (433 aa).

3-phosphoshikimate is bound by residues K21, S22, and R26. Residue K21 coordinates phosphoenolpyruvate. Phosphoenolpyruvate is bound by residues G92 and R120. The 3-phosphoshikimate site is built by S166, Q168, D317, and K344. A phosphoenolpyruvate-binding site is contributed by Q168. The Proton acceptor role is filled by D317. Phosphoenolpyruvate-binding residues include R348 and R391.

Belongs to the EPSP synthase family. As to quaternary structure, monomer.

The protein localises to the cytoplasm. The enzyme catalyses 3-phosphoshikimate + phosphoenolpyruvate = 5-O-(1-carboxyvinyl)-3-phosphoshikimate + phosphate. The protein operates within metabolic intermediate biosynthesis; chorismate biosynthesis; chorismate from D-erythrose 4-phosphate and phosphoenolpyruvate: step 6/7. Its function is as follows. Catalyzes the transfer of the enolpyruvyl moiety of phosphoenolpyruvate (PEP) to the 5-hydroxyl of shikimate-3-phosphate (S3P) to produce enolpyruvyl shikimate-3-phosphate and inorganic phosphate. The protein is 3-phosphoshikimate 1-carboxyvinyltransferase of Caldicellulosiruptor bescii (strain ATCC BAA-1888 / DSM 6725 / KCTC 15123 / Z-1320) (Anaerocellum thermophilum).